A 500-amino-acid polypeptide reads, in one-letter code: L-arabinose isomerase (500 aa).

Residues E306, E333, H350, and H450 each contribute to the Mn(2+) site.

The protein belongs to the arabinose isomerase family. As to quaternary structure, homohexamer. Mn(2+) serves as cofactor.

It catalyses the reaction beta-L-arabinopyranose = L-ribulose. It functions in the pathway carbohydrate degradation; L-arabinose degradation via L-ribulose; D-xylulose 5-phosphate from L-arabinose (bacterial route): step 1/3. Its function is as follows. Catalyzes the conversion of L-arabinose to L-ribulose. This is L-arabinose isomerase from Salmonella enteritidis PT4 (strain P125109).